Here is a 921-residue protein sequence, read N- to C-terminus: TRPM8 channel-associated factor 1 (921 aa).

The 300-residue stretch at 542-841 folds into the Peptidase M60 domain; that stretch reads YCWMSTGLYI…TYLQLQEAFG (300 aa).

The protein belongs to the TCAF family. In terms of assembly, interacts with TRPM8 (via N-terminus and C-terminus domains); the interaction inhibits TRPM8 channel activity. Interacts with TRPV6.

The protein resides in the cell membrane. Functionally, positively regulates the plasma membrane cation channel TRPM8 activity. Involved in the recruitment of TRPM8 to the cell surface. Promotes prostate cancer cell migration inhibition in a TRPM8-dependent manner. The polypeptide is TRPM8 channel-associated factor 1 (Bos taurus (Bovine)).